The sequence spans 534 residues: Prolyl 4-hydroxylase subunit alpha-1 (534 aa).

Positions 1–17 (MIWYILIIGILLPQSLA) are cleaved as a signal peptide. Asn-113 carries N-linked (GlcNAc...) asparagine glycosylation. One copy of the TPR repeat lies at 205-238 (VSVLDYLSYAVYQQGDLDKALLLTKKLLELDPEH). An N-linked (GlcNAc...) asparagine glycan is attached at Asn-259. One can recognise a Fe2OG dioxygenase domain in the interval 411-519 (TAEELQVANY…KWVSNKWLHE (109 aa)). Residues His-429, Asp-431, and His-500 each coordinate Fe cation. Lys-510 contributes to the 2-oxoglutarate binding site.

This sequence belongs to the P4HA family. As to quaternary structure, heterotetramer of two alpha-1 chains and two beta chains (P4HB)(the beta chain is the multi-functional PDI), where P4HB plays the role of a structural subunit; this tetramer catalyzes the formation of 4-hydroxyproline in collagen. Fe(2+) serves as cofactor. It depends on L-ascorbate as a cofactor. As to expression, expressed in the heart, liver, skeletal muscle, kidney, placenta, lung and pancreas.

Its subcellular location is the endoplasmic reticulum lumen. It catalyses the reaction L-prolyl-[collagen] + 2-oxoglutarate + O2 = trans-4-hydroxy-L-prolyl-[collagen] + succinate + CO2. With respect to regulation, inhibited by poly(L-proline). Functionally, catalyzes the post-translational formation of 4-hydroxyproline in -Xaa-Pro-Gly- sequences in collagens and other proteins. The protein is Prolyl 4-hydroxylase subunit alpha-1 (P4HA1) of Homo sapiens (Human).